The following is a 429-amino-acid chain: Ribosomal RNA small subunit methyltransferase B (429 aa).

Residues 254 to 260 (CAAPGGK), D277, D303, and D322 each bind S-adenosyl-L-methionine. C375 acts as the Nucleophile in catalysis. The segment at 397-419 (ALSETGTPDQPGQQNLPGGEEGD) is disordered. Residues 400 to 412 (ETGTPDQPGQQNL) show a composition bias toward polar residues.

It belongs to the class I-like SAM-binding methyltransferase superfamily. RsmB/NOP family.

Its subcellular location is the cytoplasm. It carries out the reaction cytidine(967) in 16S rRNA + S-adenosyl-L-methionine = 5-methylcytidine(967) in 16S rRNA + S-adenosyl-L-homocysteine + H(+). Functionally, specifically methylates the cytosine at position 967 (m5C967) of 16S rRNA. In Salmonella heidelberg (strain SL476), this protein is Ribosomal RNA small subunit methyltransferase B.